We begin with the raw amino-acid sequence, 318 residues long: tRNA uridine(34) hydroxylase (318 aa).

A Rhodanese domain is found at 123–217 (EDDDTVIIDA…YGKDPETKGQ (95 aa)). Residue Cys177 is the Cysteine persulfide intermediate of the active site.

The protein belongs to the TrhO family.

It carries out the reaction uridine(34) in tRNA + AH2 + O2 = 5-hydroxyuridine(34) in tRNA + A + H2O. Functionally, catalyzes oxygen-dependent 5-hydroxyuridine (ho5U) modification at position 34 in tRNAs. The sequence is that of tRNA uridine(34) hydroxylase from Staphylococcus aureus (strain MRSA252).